The sequence spans 146 residues: UPF0178 protein BCE33L2782 (146 aa).

It belongs to the UPF0178 family.

This is UPF0178 protein BCE33L2782 from Bacillus cereus (strain ZK / E33L).